Reading from the N-terminus, the 278-residue chain is Protoheme IX farnesyltransferase (278 aa).

Helical transmembrane passes span 12–32 (VIWLLILSSVVGYVYAAGTVD), 36–56 (LAALTAAATLAVGGSAAFNHY), 72–92 (PLPAGAIPPSNALVYSLALSA), 105–124 (LPGVFVALGWFFYAVVYTVW), 130–150 (WLNILGGGFAGNATFLGGYAL), 157–177 (LPAVLISFAIYLWIPSHIWAL), 204–224 (AIISALNIASAAYILWLYLVF), 228–248 (LPGLALVLAGVAGTVATSALA), and 257–277 (MWRMYKASSPILTLFLLALVF).

It belongs to the UbiA prenyltransferase family. Protoheme IX farnesyltransferase subfamily.

It localises to the cell membrane. It carries out the reaction heme b + (2E,6E)-farnesyl diphosphate + H2O = Fe(II)-heme o + diphosphate. The protein operates within porphyrin-containing compound metabolism; heme O biosynthesis; heme O from protoheme: step 1/1. Converts heme B (protoheme IX) to heme O by substitution of the vinyl group on carbon 2 of heme B porphyrin ring with a hydroxyethyl farnesyl side group. This chain is Protoheme IX farnesyltransferase, found in Pyrobaculum neutrophilum (strain DSM 2338 / JCM 9278 / NBRC 100436 / V24Sta) (Thermoproteus neutrophilus).